The chain runs to 255 residues: Putative mediator of RNA polymerase II transcription subunit 30 (255 aa).

Over residues 58–107 the composition is skewed to low complexity; sequence QSQQLQQPQSIPSSTNNSTNTNTNNSTTTTTTSSTSSTTTPTTTTSTTSP. 2 disordered regions span residues 58–133 and 177–207; these read QSQQ…TLNL and NIDNDDTIMKDDNNNSSTSAPTTTTINIEKQ. Positions 108–133 are enriched in polar residues; the sequence is LNSKDSTATTTTKEQPSSPTLPTLNL. A compositionally biased stretch (basic and acidic residues) spans 177–189; that stretch reads NIDNDDTIMKDDN. The span at 190-201 shows a compositional bias: low complexity; sequence NNSSTSAPTTTT.

This sequence belongs to the Mediator complex subunit 30 family. Highly divergent. As to quaternary structure, component of the Mediator complex.

It is found in the nucleus. Component of the Mediator complex, a coactivator involved in the regulated transcription of nearly all RNA polymerase II-dependent genes. Mediator functions as a bridge to convey information from gene-specific regulatory proteins to the basal RNA polymerase II transcription machinery. Mediator is recruited to promoters by direct interactions with regulatory proteins and serves as a scaffold for the assembly of a functional preinitiation complex with RNA polymerase II and the general transcription factors. In Dictyostelium discoideum (Social amoeba), this protein is Putative mediator of RNA polymerase II transcription subunit 30 (med30).